Here is a 269-residue protein sequence, read N- to C-terminus: Formamidopyrimidine-DNA glycosylase (269 aa).

Catalysis depends on proline 2, which acts as the Schiff-base intermediate with DNA. The Proton donor role is filled by glutamate 3. Residue lysine 57 is the Proton donor; for beta-elimination activity of the active site. Histidine 90, arginine 109, and lysine 150 together coordinate DNA. Residues glutamine 235–histidine 269 form an FPG-type zinc finger. Arginine 259 functions as the Proton donor; for delta-elimination activity in the catalytic mechanism.

This sequence belongs to the FPG family. Monomer. Zn(2+) is required as a cofactor.

It carries out the reaction Hydrolysis of DNA containing ring-opened 7-methylguanine residues, releasing 2,6-diamino-4-hydroxy-5-(N-methyl)formamidopyrimidine.. The enzyme catalyses 2'-deoxyribonucleotide-(2'-deoxyribose 5'-phosphate)-2'-deoxyribonucleotide-DNA = a 3'-end 2'-deoxyribonucleotide-(2,3-dehydro-2,3-deoxyribose 5'-phosphate)-DNA + a 5'-end 5'-phospho-2'-deoxyribonucleoside-DNA + H(+). In terms of biological role, involved in base excision repair of DNA damaged by oxidation or by mutagenic agents. Acts as a DNA glycosylase that recognizes and removes damaged bases. Has a preference for oxidized purines, such as 7,8-dihydro-8-oxoguanine (8-oxoG). Has AP (apurinic/apyrimidinic) lyase activity and introduces nicks in the DNA strand. Cleaves the DNA backbone by beta-delta elimination to generate a single-strand break at the site of the removed base with both 3'- and 5'-phosphates. The polypeptide is Formamidopyrimidine-DNA glycosylase (Yersinia pseudotuberculosis serotype O:1b (strain IP 31758)).